The chain runs to 344 residues: Sorting nexin-16 (344 aa).

Residues Met1 to Met10 show a composition bias toward pro residues. 2 disordered regions span residues Met1–Ser66 and Ala81–Pro107. Positions Asn14–Arg26 are enriched in polar residues. The segment covering Ser27–Ser40 has biased composition (low complexity). A compositionally biased stretch (polar residues) spans Lys41–Ser66. A PX domain is found at Asp105–Gly218. A 1,2-diacyl-sn-glycero-3-phospho-(1D-myo-inositol-3-phosphate) is bound by residues Arg144, Thr146, and Arg184. Phosphoserine is present on Ser222. The stretch at Leu223 to Glu278 forms a coiled coil.

It belongs to the sorting nexin family. In terms of assembly, homooligomer. Interacts with EGFR. As to expression, detected in placenta, lung, liver,heart and pancreas.

Its subcellular location is the early endosome membrane. The protein resides in the late endosome membrane. It localises to the cytoplasm. It is found in the lysosome. Functionally, may be involved in several stages of intracellular trafficking. Plays a role in protein transport from early to late endosomes. Plays a role in protein transport to the lysosome. Promotes degradation of EGFR after EGF signaling. Plays a role in intracellular transport of vesicular stomatitis virus nucleocapsids from the endosome to the cytoplasm. This chain is Sorting nexin-16 (SNX16), found in Homo sapiens (Human).